The chain runs to 342 residues: Protein FinQ (342 aa).

Positions 208–227 form a DNA-binding region, H-T-H motif; it reads RDREFNLLNAQISMVLYICS.

In terms of biological role, transcriptional inhibitor of the F plasmid transfer genes. FinQ may regulate a gene or genes encoded on the IncI plasmids, and coincidentally may inhibit F transfer when coresident. This Escherichia coli protein is Protein FinQ (finQ).